A 135-amino-acid polypeptide reads, in one-letter code: HVA22-like protein d (135 aa).

Transmembrane regions (helical) follow at residues 11–31 (LHSGAGPIVMLLYPLYASVIA), 42–62 (QWLAYWIIYSFLSLTELILQS), and 63–83 (LIEWIPIWYTVKLVFVAWLVL).

It belongs to the DP1 family. As to expression, predominantly expressed in flower buds.

Its subcellular location is the membrane. The sequence is that of HVA22-like protein d (HVA22D) from Arabidopsis thaliana (Mouse-ear cress).